The sequence spans 456 residues: Cytochrome P450 monooxygenase avaH (456 aa).

A helical transmembrane segment spans residues 243 to 263; that stretch reads LMSYFVSVFLVNVALFNAVSI. C403 serves as a coordination point for heme.

The protein belongs to the cytochrome P450 family. It depends on heme as a cofactor.

The protein resides in the membrane. It functions in the pathway secondary metabolite biosynthesis. Cytochrome P450 monooxygenase; part of the cluster that mediates the biosynthesis of a highly modified cyclo-arginine-tryptophan dipeptide (cRW). The first step of the pathway is perfornmed by the arginine-containing cyclodipeptide synthase (RCPDS) avaA that acts as the scaffold-generating enzyme and is responsible for formation of the cyclo-Arg-Trp (cRW) diketopiperazine. AvaB then acts as a multifunctional flavoenzyme that is responsible for generating the cyclo-Arg-formylkynurenine DKP, which can be deformylated by avaC. AvaB then further catalyzes an additional N-oxidation followed by cyclization and dehydration. The next step is an N-acetylation of the guanidine group catalyzed by the arginine N-acetyltransferase avaD. The roles of the additional enzymes identified within the ava cluster still have to be determined. In Aspergillus versicolor, this protein is Cytochrome P450 monooxygenase avaH.